Consider the following 401-residue polypeptide: Elongation factor Tu 2 (401 aa).

The 200-residue stretch at 10–209 (KPHVNVGTIG…AVDEYIPTPV (200 aa)) folds into the tr-type G domain. The segment at 19–26 (GHVDHGKT) is G1. 19–26 (GHVDHGKT) serves as a coordination point for GTP. Threonine 26 serves as a coordination point for Mg(2+). The G2 stretch occupies residues 60–64 (GITIA). The interval 81 to 84 (DCPG) is G3. GTP-binding positions include 81-85 (DCPGH) and 136-139 (NKVD). Positions 136-139 (NKVD) are G4. The G5 stretch occupies residues 174–176 (SAL).

It belongs to the TRAFAC class translation factor GTPase superfamily. Classic translation factor GTPase family. EF-Tu/EF-1A subfamily. Monomer.

The protein resides in the cytoplasm. The catalysed reaction is GTP + H2O = GDP + phosphate + H(+). GTP hydrolase that promotes the GTP-dependent binding of aminoacyl-tRNA to the A-site of ribosomes during protein biosynthesis. The sequence is that of Elongation factor Tu 2 from Roseiflexus sp. (strain RS-1).